The primary structure comprises 449 residues: Zinc finger and BTB domain-containing protein 14 (449 aa).

One can recognise a BTB domain in the interval 36–102; it reads CDIAIVVEDV…MYTAKISVKK (67 aa). Lys46 participates in a covalent cross-link: Glycyl lysine isopeptide (Lys-Gly) (interchain with G-Cter in SUMO2). Positions 50–66 match the Nuclear localization signal motif; it reads HRCVLAACSTYFKKLFK. The interval 156 to 194 is disordered; it reads ADAQDDDVEEIGDQDDSPSDDTVEGTPPSQEDGKSPTTT. The segment covering 157–178 has biased composition (acidic residues); it reads DAQDDDVEEIGDQDDSPSDDTV. Residues Lys203 and Lys249 each participate in a glycyl lysine isopeptide (Lys-Gly) (interchain with G-Cter in SUMO2) cross-link. C2H2-type zinc fingers lie at residues 277–304, 305–332, 333–360, 361–388, and 389–417; these read IACQ…ADRP, FVCE…GYKP, YSCE…NERP, FACH…GEKP, and FVCG…ERKQ. The segment covering 405 to 417 has biased composition (basic and acidic residues); it reads KRHENNMHSERKQ. Residues 405-424 form a disordered region; the sequence is KRHENNMHSERKQVTPSAIQ.

This sequence belongs to the krueppel C2H2-type zinc-finger protein family. As to quaternary structure, interacts with ZBTB21. In terms of tissue distribution, ubiquitous.

The protein localises to the nucleus. Transcriptional activator of the dopamine transporter (DAT), binding it's promoter at the consensus sequence 5'-CCTGCACAGTTCACGGA-3'. Binds to 5'-d(GCC)(n)-3' trinucleotide repeats in promoter regions and acts as a repressor of the FMR1 gene. Transcriptional repressor of MYC and thymidine kinase promoters. The protein is Zinc finger and BTB domain-containing protein 14 (Zbtb14) of Mus musculus (Mouse).